The chain runs to 404 residues: Serine/threonine transporter SstT (404 aa).

9 helical membrane passes run 17 to 37 (IGIG…VTAI), 39 to 59 (ILGQ…VFAL), 75 to 95 (MTLI…VAVI), 138 to 158 (ALAT…GLAL), 179 to 199 (IVVW…FSTV), 212 to 232 (LLIL…NPLL), 287 to 307 (IPLG…VLTL), 319 to 339 (FLTA…ASGV), and 354 to 374 (FGIS…VGVI).

It belongs to the dicarboxylate/amino acid:cation symporter (DAACS) (TC 2.A.23) family.

It localises to the cell membrane. It catalyses the reaction L-serine(in) + Na(+)(in) = L-serine(out) + Na(+)(out). The enzyme catalyses L-threonine(in) + Na(+)(in) = L-threonine(out) + Na(+)(out). Involved in the import of serine and threonine into the cell, with the concomitant import of sodium (symport system). This chain is Serine/threonine transporter SstT, found in Streptococcus equi subsp. equi (strain 4047).